The primary structure comprises 265 residues: Ribosomal RNA small subunit methyltransferase A (265 aa).

Histidine 13, leucine 15, glycine 40, glutamate 62, aspartate 87, and asparagine 106 together coordinate S-adenosyl-L-methionine.

The protein belongs to the class I-like SAM-binding methyltransferase superfamily. rRNA adenine N(6)-methyltransferase family. RsmA subfamily.

The protein localises to the cytoplasm. The enzyme catalyses adenosine(1518)/adenosine(1519) in 16S rRNA + 4 S-adenosyl-L-methionine = N(6)-dimethyladenosine(1518)/N(6)-dimethyladenosine(1519) in 16S rRNA + 4 S-adenosyl-L-homocysteine + 4 H(+). In terms of biological role, specifically dimethylates two adjacent adenosines (A1518 and A1519) in the loop of a conserved hairpin near the 3'-end of 16S rRNA in the 30S particle. May play a critical role in biogenesis of 30S subunits. This is Ribosomal RNA small subunit methyltransferase A from Persephonella marina (strain DSM 14350 / EX-H1).